Consider the following 459-residue polypeptide: Cysteine--tRNA ligase (459 aa).

Cys-28 serves as a coordination point for Zn(2+). The 'HIGH' region motif lies at 30 to 40 (VTVYDLCHIGH). Cys-209, His-234, and Glu-238 together coordinate Zn(2+). Positions 266–270 (KMSKS) match the 'KMSKS' region motif. Lys-269 is a binding site for ATP.

It belongs to the class-I aminoacyl-tRNA synthetase family. In terms of assembly, monomer. Zn(2+) is required as a cofactor.

The protein localises to the cytoplasm. The enzyme catalyses tRNA(Cys) + L-cysteine + ATP = L-cysteinyl-tRNA(Cys) + AMP + diphosphate. In Histophilus somni (strain 2336) (Haemophilus somnus), this protein is Cysteine--tRNA ligase.